Here is a 130-residue protein sequence, read N- to C-terminus: uncharacterized protein (130 aa).

Residues 1–104 (MRPGSSPRAP…RGRWGLRGGP (104 aa)) form a disordered region. The segment covering 88-97 (RRQPGPQRGR) has biased composition (low complexity).

This is an uncharacterized protein from Homo sapiens (Human).